The primary structure comprises 437 residues: MANVVVIGAQWGDEGKGKITDLLSRSADVVVRYQGGVNAGHTIVVKDKVLKLHLIPSGILYPDTICLIGSGTVIDPKIMLSELDMLVENQIDISRLQLASTAHVTMPYHRLLDQAMEQRRGNNRIGTTGRGIGPTYSDKSERIGIRVIDILNEDKLRTRLADPLRQKNNILEKIYAISPLDFEEIIKEYIEYGNRLAPHVVDCTRVIHQAARARKNILFEGAQGTLLDLDHGTYPYVTSSHPVSGGACIGAGVGPTLIDRVIGVAKAYTTRVGEGPFPTELEGSLNDHLCSRGKEFGTTTGRRRRCGWFDGVIGRYAVDVNGLDCLAITKLDVLDELEEIKVCVAYELNNERIDYFTSNVEDFSKCKPIFETLPGWQSSTSDCRSLEELPEKAMMYLKFLAELMEVPIAIVSIGPNRDQTIIVEDPIHGPKRALLAA.

GTP contacts are provided by residues 12-18 and 40-42; these read GDEGKGK and GHT. D13 acts as the Proton acceptor in catalysis. Mg(2+) contacts are provided by D13 and G40. IMP-binding positions include 13–16, 38–41, T128, R142, Q223, T238, and R302; these read DEGK and NAGH. H41 serves as the catalytic Proton donor. Residue 298–304 participates in substrate binding; that stretch reads TTTGRRR. GTP-binding positions include R304 and 330–332; that span reads KLD.

This sequence belongs to the adenylosuccinate synthetase family. As to quaternary structure, homodimer. Mg(2+) is required as a cofactor.

The protein localises to the plastid. Its subcellular location is the organellar chromatophore. It carries out the reaction IMP + L-aspartate + GTP = N(6)-(1,2-dicarboxyethyl)-AMP + GDP + phosphate + 2 H(+). Its pathway is purine metabolism; AMP biosynthesis via de novo pathway; AMP from IMP: step 1/2. Functionally, plays an important role in the de novo pathway and in the salvage pathway of purine nucleotide biosynthesis. Catalyzes the first committed step in the biosynthesis of AMP from IMP. This is Adenylosuccinate synthetase, organellar chromatophore from Paulinella chromatophora.